The following is a 414-amino-acid chain: GA-binding protein subunit beta-2 (414 aa).

ANK repeat units lie at residues 5-34 (DLGK…PFTT), 37-66 (LGTS…SRDA), 70-99 (VDRT…DVNA), 103-132 (LQMT…DVYA), and 136-166 (FDKS…QVNT). At Ser218 the chain carries Phosphoserine. A coiled-coil region spans residues 310 to 362 (EEMKEGSERELLQQQLQEANRRAQEYRHQLLKKEQEAEQYRLRLEAMAQQQTN).

In terms of assembly, heterotetramer of two alpha and two beta subunits. The C-terminal is necessary for the formation of a heterotetrameric GABP-alpha-2/beta-2 complex, and also facilitates homotypic dimerization. Interacts with ADGRB2. High levels in thymus, spleen, kidney and intestine.

The protein resides in the nucleus. Functionally, transcription factor capable of interacting with purine rich repeats (GA repeats). Must associate with GABP-alpha to bind DNA. The chain is GA-binding protein subunit beta-2 (Gabpb2) from Mus musculus (Mouse).